The primary structure comprises 170 residues: MTHCCSPCCQPTCCRTTCCRTTCWKPTTVTTCSSTPCCQPTCCVSSCCQPCCCPTCCQNTCCRTTCCQPTCVTSCYQPSCCSTPCCQPTCCGSSCCGQTSCGQSSSCTPVYCRRTCYYPTNVCLPGCLNQSCGSSCCQPCCHPACCETTCCRTTCFQPTCVSSCCQPSCC.

A run of 17 repeats spans residues 8–12, 13–17, 18–22, 37–41, 42–46, 51–55, 61–65, 66–70, 75–79, 80–84, 85–89, 90–94, 95–99, 140–144, 145–149, 150–154, and 164–168. The interval 8–168 is 17 X 5 AA repeats of C-C-[RQVSGE]-[SPTQ]-[TASP]; that stretch reads CCQPTCCRTT…TCVSSCCQPS (161 aa).

It belongs to the KRTAP type 9 family. In terms of assembly, interacts with hair keratins.

Its function is as follows. In the hair cortex, hair keratin intermediate filaments are embedded in an interfilamentous matrix, consisting of hair keratin-associated proteins (KRTAP), which are essential for the formation of a rigid and resistant hair shaft through their extensive disulfide bond cross-linking with abundant cysteine residues of hair keratins. The matrix proteins include the high-sulfur and high-glycine-tyrosine keratins. This chain is Keratin-associated protein 9-2 (KRTAP9-2), found in Pan troglodytes (Chimpanzee).